The following is a 734-amino-acid chain: MALRIPRFSQGIAQDPTTRRIWFGIATAHDFESHDDITEGRLYQNIFASHFGQLAIIFLWTSGNLFHVAWQGNFEAWVQDPFHVRPIAHAIWDPHFGQPAVEAFTRGGALGPVNNAYSGVYQWWYTIGLRTNEDLYTGAIFLLFLSFISLLAGWLHLQPKWKPSVSWFKNAESRLNHHLSGLFGVSSLAWAGHLVHVAIPGSRGEYVRWNNFLDVLPYPQGLGPLLTGQWNLYAQNPSSSNHLFGTTQGAGTAILTILGGFHPQTQSLWLTDVAHHHLAIAFLFLIGGLMYRTNFGIGHSIKYILEAHIPPGGRLGRGHKGLYDTINNSIHFQLGLALASLGVITSLVAQHMYSLPAYAFIAQDFTTQAALYTHHQYIAGFIMTGAFAHGPIFFIRDYNPEQNADNVLARMLEHKEAIISHLSWASLFLGFHTLGLYVHNDVMLAFGTPEKQILIEPIFAQWIQSAHGKTTYGFDIPLSSTNGPALNAGRNIWLPGWLNAINENSNSLFLTIGPGDFLVHHAIALGLHTTTLILVKGALDARGSKLMPDKKDFGYSFPCDGPGRGGTCDISAWDDFYLAVFWMLNTIGWVTFYWHWKHITLWRGNVSQFNESSTYLMGWLRDYLWLNSSQLINGITPLVCNSLSVWAWMFLFGHLVWATGFMFLISWRGYWQELIETLAWAHERTPLANLIRWRDKPVALSIVQARLVGLVHFSVGYIFTYAAFLIASTSGKFG.

Helical transmembrane passes span 46–69, 135–158, 175–199, 273–291, 330–353, 369–395, 417–439, and 517–535; these read IFASHFGQLAIIFLWTSGNLFHVA, LYTGAIFLLFLSFISLLAGWLHLQ, LNHHLSGLFGVSSLAWAGHLVHVAI, VAHHHLAIAFLFLIGGLMY, IHFQLGLALASLGVITSLVAQHMY, AALYTHHQYIAGFIMTGAFAHGPIFFI, AIISHLSWASLFLGFHTLGLYVH, and FLVHHAIALGLHTTTLILV. [4Fe-4S] cluster is bound by residues Cys559 and Cys568. A run of 2 helical transmembrane segments spans residues 575 to 596 and 643 to 665; these read DFYLAVFWMLNTIGWVTFYWHW and LSVWAWMFLFGHLVWATGFMFLI. The chlorophyll a site is built by His654, Met662, and Tyr670. Residue Trp671 coordinates phylloquinone. Residues 707 to 727 traverse the membrane as a helical segment; that stretch reads LVGLVHFSVGYIFTYAAFLIA.

Belongs to the PsaA/PsaB family. As to quaternary structure, the PsaA/B heterodimer binds the P700 chlorophyll special pair and subsequent electron acceptors. PSI consists of a core antenna complex that captures photons, and an electron transfer chain that converts photonic excitation into a charge separation. The eukaryotic PSI reaction center is composed of at least 11 subunits. P700 is a chlorophyll a/chlorophyll a' dimer, A0 is one or more chlorophyll a, A1 is one or both phylloquinones and FX is a shared 4Fe-4S iron-sulfur center. serves as cofactor.

The protein localises to the plastid. Its subcellular location is the chloroplast thylakoid membrane. The catalysed reaction is reduced [plastocyanin] + hnu + oxidized [2Fe-2S]-[ferredoxin] = oxidized [plastocyanin] + reduced [2Fe-2S]-[ferredoxin]. Its function is as follows. PsaA and PsaB bind P700, the primary electron donor of photosystem I (PSI), as well as the electron acceptors A0, A1 and FX. PSI is a plastocyanin-ferredoxin oxidoreductase, converting photonic excitation into a charge separation, which transfers an electron from the donor P700 chlorophyll pair to the spectroscopically characterized acceptors A0, A1, FX, FA and FB in turn. Oxidized P700 is reduced on the lumenal side of the thylakoid membrane by plastocyanin. This is Photosystem I P700 chlorophyll a apoprotein A2 from Pisum sativum (Garden pea).